The following is a 245-amino-acid chain: Probable transcriptional regulatory protein SUN_1622 (245 aa).

The protein belongs to the TACO1 family.

The protein localises to the cytoplasm. This chain is Probable transcriptional regulatory protein SUN_1622, found in Sulfurovum sp. (strain NBC37-1).